Consider the following 309-residue polypeptide: Dicarboxylate carrier UCP2 (309 aa).

At 1–16 (MVGFKATDVPPTATVK) the chain is on the mitochondrial intermembrane side. Solcar repeat units lie at residues 11–106 (PTAT…VKQF), 114–203 (AGIG…IKDT), and 212–297 (DDLP…LKRA). The segment at 16–63 (KFLGAGTAACIADLITFPLDTAKVRLQIQGESQGLVRTAASAQYRGVL) is important for interaction with long-chain fatty acids. Residues 17 to 40 (FLGAGTAACIADLITFPLDTAKVR) traverse the membrane as a helical segment. At 41-77 (LQIQGESQGLVRTAASAQYRGVLGTILTMVRTEGPRS) the chain is on the mitochondrial matrix side. A helical membrane pass occupies residues 78–103 (LYNGLVAGLQRQMSFASVRIGLYDSV). The Mitochondrial intermembrane portion of the chain corresponds to 104–119 (KQFYTKGSEHAGIGSR). Residues 120–145 (LLAGSTTGALAVAVAQPTDVVKVRFQ) traverse the membrane as a helical segment. Residues 146–173 (AQARAGGGRRYQSTVEAYKTIAREEGIR) lie on the Mitochondrial matrix side of the membrane. Residues 174–199 (GLWKGTSPNVARNAIVNCAELVTYDL) form a helical membrane-spanning segment. At 200-217 (IKDTLLKANLMTDDLPCH) the chain is on the mitochondrial intermembrane side. Residues 218 to 242 (FTSAFGAGFCTTVIASPVDVVKTRY) form a helical membrane-spanning segment. Topologically, residues 243-268 (MNSALGQYHSAGHCALTMLRKEGPRA) are mitochondrial matrix. The chain crosses the membrane as a helical span at residues 269–294 (FYKGFMPSFLRLGSWNVVMFVTYEQL). Residues 278–285 (LRLGSWNV) are important for interaction with long-chain fatty acids. The Mitochondrial intermembrane portion of the chain corresponds to 295–309 (KRALMAAYQSREAPF).

It belongs to the mitochondrial carrier (TC 2.A.29) family. In terms of assembly, homotetramer. Adopts an asymmetrical dimer of dimers functional form. Interacts with MICU1 (when methylated); leading to decrease the calcium sensitivity of MICU1. As to expression, widely expressed. Highest in spleen, lung, white and brown adipose tissues. 4-6 times higher levels are detected in white adipose tissue of ob/ob and db/db mice when compared to lean littermates. Expressed in neurons of the ventromedial nucleus of the hypothalamus (at protein level). Expressed in thymocytes (at protein level).

It is found in the mitochondrion inner membrane. It catalyses the reaction L-aspartate(out) + phosphate(in) + H(+)(in) = L-aspartate(in) + phosphate(out) + H(+)(out). The catalysed reaction is oxaloacetate(out) + phosphate(in) + H(+)(in) = oxaloacetate(in) + phosphate(out) + H(+)(out). It carries out the reaction (S)-malate(out) + phosphate(in) + H(+)(in) = (S)-malate(in) + phosphate(out) + H(+)(out). The enzyme catalyses malonate(out) + phosphate(in) + H(+)(in) = malonate(in) + phosphate(out) + H(+)(out). It catalyses the reaction sulfate(out) + phosphate(in) + H(+)(in) = sulfate(in) + phosphate(out) + H(+)(out). The catalysed reaction is (S)-malate(out) = (S)-malate(in). It carries out the reaction L-aspartate(out) = L-aspartate(in). The enzyme catalyses phosphate(in) = phosphate(out). It catalyses the reaction chloride(in) = chloride(out). The catalysed reaction is H(+)(in) = H(+)(out). It carries out the reaction a long-chain fatty acid(out) = a long-chain fatty acid(in). Its activity is regulated as follows. Proton conductance is activated by free long-chain fatty acids and allosterically inhibited by purine nucleotides. Could be constitutively inhibited by GDP. Functionally, antiporter that exports dicarboxylate intermediates of the Krebs cycle in exchange for phosphate plus a proton across the inner membrane of mitochondria, a process driven by mitochondrial motive force with an overall impact on glycolysis, glutaminolysis and glutathione-dependent redox balance. Continuous export of oxaloacetate and related four-carbon dicarboxylates from mitochondrial matrix into the cytosol negatively regulates the oxidation of acetyl-CoA substrates via the Krebs cycle lowering the ATP/ADP ratio and reactive oxygen species (ROS) production. May mediate inducible proton entry into the mitochondrial matrix affecting ATP turnover as a protection mechanism against oxidative stress. The proton currents are most likely associated with fatty acid flipping across the inner membrane of mitochondria in a metabolic process regulated by free fatty acids and purine nucleotides. Regulates the use of glucose as a source of energy. Required for glucose-induced DRP1-dependent mitochondrial fission and neuron activation in the ventromedial nucleus of the hypothalamus (VMH). This mitochondrial adaptation mechanism modulates the VMH pool of glucose-excited neurons with an impact on systemic glucose homeostasis. Regulates ROS levels and metabolic reprogramming of macrophages during the resolution phase of inflammation. Attenuates ROS production in response to IL33 to preserve the integrity of the Krebs cycle required for persistent production of itaconate and subsequent GATA3-dependent differentiation of inflammation-resolving alternatively activated macrophages. Can unidirectionally transport anions including L-malate, L-aspartate, phosphate and chloride ions. Does not mediate adaptive thermogenesis. The chain is Dicarboxylate carrier UCP2 (Ucp2) from Mus musculus (Mouse).